We begin with the raw amino-acid sequence, 497 residues long: MNLIKHAAFAASFQGETDCTSHASARKFSTSGSSPLLDSTEGNGFKGHSMLAPFTAGWHSTDLEPLIIERSEGSYVYDSKGNKYLDTLAGLWCTALGGSEPRLVKAATDQLNKLPFYHSFWNSTAKPPLDLAEELISMFTAKEMGKVFFTNSGSEANDSQVKLVWYYNNALGRPNKKKIIAQSQAYHGSTLISASLSGLPAMHLKFDLPAPFVLHTDCPHYWRFGLPGEAEEEFATRLADNLENLILKEGPETVAAFIAEPVIGAGGVIPPPKTYFEKIQAVLQKYDVLFIADEVITGFGRLGTMFGSDLYNIKPDLVSLAKALSSAYVPIGATLVSPEISDVVHSQSNKIGFFAHGFTYSGHPVSCAVALEALKIYRERNIPAHVKQISPRFQEGIKAFAGSSIIGETRGVGLLLATEFANNKSPNDPFPVEWGVAQIFGAECKKRGMLVKVVGDEIAMSPPLIMSQREVDGLVSIYGEALKATEERVAELRSKKK.

A mitochondrion-targeting transit peptide spans 1-37 (MNLIKHAAFAASFQGETDCTSHASARKFSTSGSSPLL). 153 to 154 (GS) contributes to the pyridoxal 5'-phosphate binding site. Y186 is a binding site for substrate. Position 293 (D293) interacts with pyridoxal 5'-phosphate. K322 is a substrate binding site. K322 carries the N6-(pyridoxal phosphate)lysine modification.

It belongs to the class-III pyridoxal-phosphate-dependent aminotransferase family.

Its subcellular location is the mitochondrion. It catalyses the reaction 4-aminobutanoate + pyruvate = succinate semialdehyde + L-alanine. The catalysed reaction is 4-aminobutanoate + glyoxylate = succinate semialdehyde + glycine. Functionally, transaminase that degrades gamma-amino butyric acid (GABA). The polypeptide is Probable gamma-aminobutyrate transaminase 2, mitochondrial (Oryza sativa subsp. indica (Rice)).